The primary structure comprises 141 residues: uncharacterized protein (141 aa).

The next 2 helical transmembrane spans lie at 12–32 (GIAGCGAGGVVMAIASVTLVT) and 35–55 (PGRVLTGVAALGLILFASATW).

It localises to the cell membrane. This is an uncharacterized protein from Mycobacterium tuberculosis (strain CDC 1551 / Oshkosh).